A 328-amino-acid polypeptide reads, in one-letter code: Isopenicillin N synthase (328 aa).

Isopenicillin N contacts are provided by Arg-85, Tyr-89, Ser-181, and Tyr-187. N-[(5S)-5-amino-5-carboxypentanoyl]-L-cysteinyl-D-valine-binding residues include Arg-85, Tyr-89, Ser-181, Tyr-187, His-210, and Asp-212. Positions 178-284 (TLSSVSLIRY…RLSLPFFFHA (107 aa)) constitute a Fe2OG dioxygenase domain. Fe(2+) is bound by residues His-210, Asp-212, and His-266. Residue Arg-275 participates in 2-oxoglutarate binding. Residue Ser-277 participates in isopenicillin N binding. Position 277 (Ser-277) interacts with N-[(5S)-5-amino-5-carboxypentanoyl]-L-cysteinyl-D-valine.

The protein belongs to the iron/ascorbate-dependent oxidoreductase family. Requires Fe cation as cofactor. It depends on L-ascorbate as a cofactor.

It catalyses the reaction N-[(5S)-5-amino-5-carboxypentanoyl]-L-cysteinyl-D-valine + O2 = isopenicillin N + 2 H2O. It participates in antibiotic biosynthesis; penicillin G biosynthesis; penicillin G from L-alpha-aminoadipate and L-cysteine and L-valine: step 2/3. Functionally, removes, in the presence of oxygen, 4 hydrogen atoms from delta-L-(alpha-aminoadipyl)-L-cysteinyl-D-valine (ACV) to form the azetidinone and thiazolidine rings of isopenicillin. The protein is Isopenicillin N synthase (pcbC) of Amycolatopsis lactamdurans (Nocardia lactamdurans).